A 92-amino-acid chain; its full sequence is UPF0728 protein (92 aa).

The protein belongs to the UPF0728 family.

The protein is UPF0728 protein of Branchiostoma floridae (Florida lancelet).